The sequence spans 931 residues: Bifunctional uridylyltransferase/uridylyl-removing enzyme (931 aa).

The segment at 1–383 is uridylyltransferase; it reads MDSVATDSKA…TTGSTWRRVP (383 aa). The segment at 384–739 is uridylyl-removing; sequence ESDDFIVDNN…VGFDPARGVT (356 aa). An HD domain is found at 499–622; the sequence is VDEHLIRCIG…VQSVEQMKLL (124 aa). 2 consecutive ACT domains span residues 740–822 and 851–931; these read ELTI…AVAR and VIEV…QPAA.

It belongs to the GlnD family. Requires Mg(2+) as cofactor.

The enzyme catalyses [protein-PII]-L-tyrosine + UTP = [protein-PII]-uridylyl-L-tyrosine + diphosphate. It carries out the reaction [protein-PII]-uridylyl-L-tyrosine + H2O = [protein-PII]-L-tyrosine + UMP + H(+). Uridylyltransferase (UTase) activity is inhibited by glutamine, while glutamine activates uridylyl-removing (UR) activity. In terms of biological role, modifies, by uridylylation and deuridylylation, the PII regulatory proteins (GlnB and homologs), in response to the nitrogen status of the cell that GlnD senses through the glutamine level. Under low glutamine levels, catalyzes the conversion of the PII proteins and UTP to PII-UMP and PPi, while under higher glutamine levels, GlnD hydrolyzes PII-UMP to PII and UMP (deuridylylation). Thus, controls uridylylation state and activity of the PII proteins, and plays an important role in the regulation of nitrogen fixation and metabolism. In Bradyrhizobium sp. (strain ORS 278), this protein is Bifunctional uridylyltransferase/uridylyl-removing enzyme.